A 264-amino-acid chain; its full sequence is Ribosomal protein L11 methyltransferase (264 aa).

S-adenosyl-L-methionine-binding residues include threonine 116, glycine 137, aspartate 159, and asparagine 200.

This sequence belongs to the methyltransferase superfamily. PrmA family.

The protein localises to the cytoplasm. It catalyses the reaction L-lysyl-[protein] + 3 S-adenosyl-L-methionine = N(6),N(6),N(6)-trimethyl-L-lysyl-[protein] + 3 S-adenosyl-L-homocysteine + 3 H(+). Its function is as follows. Methylates ribosomal protein L11. This chain is Ribosomal protein L11 methyltransferase, found in Thermotoga neapolitana (strain ATCC 49049 / DSM 4359 / NBRC 107923 / NS-E).